Reading from the N-terminus, the 429-residue chain is Cyclin-B2-2 (429 aa).

The tract at residues 66 to 98 is disordered; the sequence is SQRKQESCDKKKLDSLHPSISRSQEETKKLKPS. Positions 68–80 are enriched in basic and acidic residues; it reads RKQESCDKKKLDS.

This sequence belongs to the cyclin family. Cyclin AB subfamily. As to quaternary structure, interacts with CDC20-1 and CDC20-2. Expressed in roots.

The chain is Cyclin-B2-2 (CYCB2-2) from Arabidopsis thaliana (Mouse-ear cress).